Here is a 93-residue protein sequence, read N- to C-terminus: Small ribosomal subunit protein uS19 (93 aa).

The protein belongs to the universal ribosomal protein uS19 family.

Functionally, protein S19 forms a complex with S13 that binds strongly to the 16S ribosomal RNA. This chain is Small ribosomal subunit protein uS19, found in Acidothermus cellulolyticus (strain ATCC 43068 / DSM 8971 / 11B).